The following is a 122-amino-acid chain: Glucagon-2 (122 aa).

An N-terminal signal peptide occupies residues 1 to 21 (MTSLHSLAGLLLLMIIQSSWQ). 2 propeptides span residues 83 to 86 (NGLF) and Glu-122.

This sequence belongs to the glucagon family.

The protein localises to the secreted. Functionally, promotes hydrolysis of glycogen and lipids, and raises the blood sugar level. The sequence is that of Glucagon-2 (gcg2) from Lophius americanus (American angler).